The chain runs to 485 residues: Iroquois-class homeodomain protein IRX-4 (485 aa).

The segment at residues 142-203 (GTRRKNATRE…NARRRLKKEN (62 aa)) is a DNA-binding region (homeobox; TALE-type). The tract at residues 206 to 313 (TWPPRNKCSD…EEEEAAERAR (108 aa)) is disordered. The segment covering 221–232 (EEEEEEEEECSQ) has biased composition (acidic residues). A compositionally biased stretch (basic and acidic residues) spans 234–253 (DAMKSEKAEEPTGKEEKELE). The span at 254–269 (LSDLEDLDAAESESSE) shows a compositional bias: acidic residues. A compositionally biased stretch (pro residues) spans 282–294 (HPLPGGGPPPRAA).

This sequence belongs to the TALE/IRO homeobox family. As to expression, ventricles of the heart, developing feather buds, retina, hindbrain.

The protein localises to the nucleus. Functionally, regulates the chamber-specific expression of myosin isoforms by activating the expression of the ventricle myosin heavy chain-1 (Vmhc1) and suppressing the expression of the atrial myosin heavy chain-1 (Amhc1) in the ventricles. May play a critical role in establishing chamber-specific gene expression in the developing heart. The protein is Iroquois-class homeodomain protein IRX-4 (IRX4) of Gallus gallus (Chicken).